Here is a 191-residue protein sequence, read N- to C-terminus: Endoribonuclease YbeY (191 aa).

Zn(2+) contacts are provided by His122, His126, and His132. The disordered stretch occupies residues 164 to 191; sequence QPKPSGPKAFPDAAERAELDKEVPGGGI. Over residues 176-191 the composition is skewed to basic and acidic residues; that stretch reads AAERAELDKEVPGGGI.

The protein belongs to the endoribonuclease YbeY family. Requires Zn(2+) as cofactor.

It localises to the cytoplasm. Its function is as follows. Single strand-specific metallo-endoribonuclease involved in late-stage 70S ribosome quality control and in maturation of the 3' terminus of the 16S rRNA. In Corynebacterium aurimucosum (strain ATCC 700975 / DSM 44827 / CIP 107346 / CN-1) (Corynebacterium nigricans), this protein is Endoribonuclease YbeY.